The primary structure comprises 460 residues: Signal recognition particle 54 kDa protein (460 aa).

Residues Gly-104–Thr-111, Asp-184–Arg-188, and Thr-242–Asp-245 contribute to the GTP site.

This sequence belongs to the GTP-binding SRP family. SRP54 subfamily. Part of the signal recognition particle protein translocation system, which is composed of SRP and FtsY. Archaeal SRP consists of a 7S RNA molecule of 300 nucleotides and two protein subunits: SRP54 and SRP19.

The protein resides in the cytoplasm. The enzyme catalyses GTP + H2O = GDP + phosphate + H(+). In terms of biological role, involved in targeting and insertion of nascent membrane proteins into the cytoplasmic membrane. Binds to the hydrophobic signal sequence of the ribosome-nascent chain (RNC) as it emerges from the ribosomes. The SRP-RNC complex is then targeted to the cytoplasmic membrane where it interacts with the SRP receptor FtsY. The chain is Signal recognition particle 54 kDa protein from Halobacterium salinarum (strain ATCC 29341 / DSM 671 / R1).